The sequence spans 386 residues: Patatin group M-2 (386 aa).

An N-terminal signal peptide occupies residues 1-23; it reads MATTKSFLILFFMILATTSSTCA. In terms of domain architecture, PNPLA spans 32–229; sequence LSIDGGGIKG…TVGDPALLSL (198 aa). The GXGXXG signature appears at 36 to 41; sequence GGGIKG. A GXSXG motif is present at residues 75–79; it reads GTSTG. S77 (nucleophile) is an active-site residue. A glycan (N-linked (GlcNAc...) asparagine) is linked at N115. The Proton acceptor role is filled by D215. A DGA/G motif is present at residues 215–217; the sequence is DGG. Positions 321-384 form a coiled coil; that stretch reads ENALTGTTTE…DRKKLRANKA (64 aa).

Belongs to the patatin family. Tuber.

The protein resides in the vacuole. Its function is as follows. Probable lipolytic acyl hydrolase (LAH), an activity which is thought to be involved in the response of tubers to pathogens. The sequence is that of Patatin group M-2 from Solanum tuberosum (Potato).